The following is a 250-amino-acid chain: Hemocyanin, units C and D (250 aa).

A Cu cation-binding site is contributed by His-1. The segment at 1-106 is unit C; that stretch reads HGSTKWCPSP…RAWIEPVTSA (106 aa). Cys-7 and Cys-18 are oxidised to a cystine. The segment at residues 19–21 is a cross-link (2'-(S-cysteinyl)-histidine (Cys-His)); it reads CHH. His-21 and His-143 together coordinate Cu cation. A unit D region spans residues 107 to 250; it reads VRIRKNLNDL…DAQDVIYNNH (144 aa). Cys-149 and Cys-160 are joined by a disulfide. The segment at residues 161 to 163 is a cross-link (2'-(S-cysteinyl)-histidine (Cys-His)); that stretch reads CLH. His-172 serves as a coordination point for Cu cation.

This sequence belongs to the tyrosinase family. Hemocyanin subfamily. As to quaternary structure, decamers of large identical subunits (390 kDa), each containing 8 globular oxygen-binding functional units. Requires Cu(2+) as cofactor.

Its function is as follows. Hemocyanins are copper-containing oxygen carriers occurring freely dissolved in the hemolymph of many mollusks and arthropods. The protein is Hemocyanin, units C and D of Sepia officinalis (Common cuttlefish).